The following is a 294-amino-acid chain: MALTNNLWAFVFGILGNIISFVVFLAPVPTFVRICKKKSTEGFQSLPYVSALFSAMLWIYYAMQKDGTAFLLITINAFGCVIETIYIVLFVSYANKKTRISTLKVLGLLNFLGFAAIVLVCELLTKGSTREKVLGGICVGFSVSVFAAPLSIMRVVVRTRSVEFMPFSLSLFLTISAVTWLFYGLAIKDFYVALPNVLGAFLGAVQMILYIIFKYYKTPVAQKTDKSKDVSDHSIDIAKLTTVIPGAVLDSAVHQPPALHNVPETKIQLTEVKSQNMTDPKDQINKDVQKQSQV.

At 1–7 the chain is on the extracellular side; that stretch reads MALTNNL. The helical transmembrane segment at 8 to 28 threads the bilayer; that stretch reads WAFVFGILGNIISFVVFLAPV. The MtN3/slv 1 domain maps to 10–97; the sequence is FVFGILGNII…VLFVSYANKK (88 aa). Topologically, residues 29-42 are cytoplasmic; sequence PTFVRICKKKSTEG. Residues 43 to 63 form a helical membrane-spanning segment; that stretch reads FQSLPYVSALFSAMLWIYYAM. Residues 64–69 are Extracellular-facing; that stretch reads QKDGTA. A helical transmembrane segment spans residues 70 to 90; sequence FLLITINAFGCVIETIYIVLF. Residues 91–104 lie on the Cytoplasmic side of the membrane; sequence VSYANKKTRISTLK. A helical transmembrane segment spans residues 105–125; sequence VLGLLNFLGFAAIVLVCELLT. The Extracellular portion of the chain corresponds to 126–132; sequence KGSTREK. The helical transmembrane segment at 133–153 threads the bilayer; it reads VLGGICVGFSVSVFAAPLSIM. The MtN3/slv 2 domain maps to 133–216; that stretch reads VLGGICVGFS…MILYIIFKYY (84 aa). Residues 154-166 lie on the Cytoplasmic side of the membrane; the sequence is RVVVRTRSVEFMP. The helical transmembrane segment at 167-187 threads the bilayer; it reads FSLSLFLTISAVTWLFYGLAI. Over 188 to 192 the chain is Extracellular; it reads KDFYV. The helical transmembrane segment at 193–213 threads the bilayer; the sequence is ALPNVLGAFLGAVQMILYIIF. Over 214–294 the chain is Cytoplasmic; that stretch reads KYYKTPVAQK…NKDVQKQSQV (81 aa). Residues 273–294 are disordered; the sequence is KSQNMTDPKDQINKDVQKQSQV. The span at 279-294 shows a compositional bias: basic and acidic residues; sequence DPKDQINKDVQKQSQV.

It belongs to the SWEET sugar transporter family. As to quaternary structure, forms heterooligomers with SWEET1, SWEET3, SWEET6, SWEET7, SWEET8, SWEET9, SWEET11 and SWEET17. As to expression, expressed at low levels in leaves.

The protein localises to the cell membrane. Functionally, mediates both low-affinity uptake and efflux of sugar across the plasma membrane. Involved in nurturing the male gametophyte. This chain is Bidirectional sugar transporter SWEET13, found in Arabidopsis thaliana (Mouse-ear cress).